Here is a 317-residue protein sequence, read N- to C-terminus: L-lactate dehydrogenase (317 aa).

NAD(+)-binding positions include V17, D38, K43, Y68, and 82–83; that span reads GV. Substrate is bound at residue R91. NAD(+)-binding positions include S104, 121-123, and S146; that span reads VSN. 123 to 126 lines the substrate pocket; that stretch reads NPVD. 151 to 154 provides a ligand contact to substrate; that stretch reads DTSR. 2 residues coordinate beta-D-fructose 1,6-bisphosphate: K156 and H171. H178 serves as the catalytic Proton acceptor. Phosphotyrosine is present on Y224. A substrate-binding site is contributed by T233.

The protein belongs to the LDH/MDH superfamily. LDH family. In terms of assembly, homotetramer.

It is found in the cytoplasm. It catalyses the reaction (S)-lactate + NAD(+) = pyruvate + NADH + H(+). The protein operates within fermentation; pyruvate fermentation to lactate; (S)-lactate from pyruvate: step 1/1. Its activity is regulated as follows. Allosterically activated by fructose 1,6-bisphosphate (FBP). Its function is as follows. Catalyzes the conversion of lactate to pyruvate. In Clostridium perfringens (strain ATCC 13124 / DSM 756 / JCM 1290 / NCIMB 6125 / NCTC 8237 / Type A), this protein is L-lactate dehydrogenase.